Consider the following 408-residue polypeptide: MQTQRVPGRKRGRPPLHSTRVQMAVHNLYSASAASVPAVTIPKKRGRKPRYKIKSPVLMTPLALSPPRSTPEPDLSSIPQDAATIPSLVVPEALTVCLYINKQADVGPYLERRKLQQLPERLGPERPATVLQQAVQACIDCAHQPRLVFSLVKQGYRGELVSVSASFDGKQHLRSLPVVNSVGYVLRFLTKLCRSLLCDNLFSHLPFPGSIGASDKAQEREDGRTESAKVATAEECLANAVGMNRYAMDFSHRGSVTHSSSLYKRLTCGDSHLAGGPATTTSGSRTNPVPSGGSSSPGLRLPASSPKRNGTAIEGNRCAPSPSPEVQDTRRPSSRNPSTWTVEDVVRFVKDADPEALGPHVELFRKHEIDGNALLLLRSDMIMKYLGLKLGPALKLCYHIDKLKQAKF.

Phosphoserine is present on residues Ser-55 and Ser-65. Residues 274 to 338 (AGGPATTTSG…TRRPSSRNPS (65 aa)) form a disordered region. Positions 278–287 (ATTTSGSRTN) are enriched in polar residues. A compositionally biased stretch (low complexity) spans 288–306 (PVPSGGSSSPGLRLPASSP). The SAM domain maps to 340–406 (WTVEDVVRFV…CYHIDKLKQA (67 aa)).

Belongs to the SCM family.

The protein resides in the nucleus. Its function is as follows. Putative Polycomb group (PcG) protein. PcG proteins act by forming multiprotein complexes, which are required to maintain the transcriptionally repressive state of homeotic genes throughout development. The chain is Sex comb on midleg-like protein 4 (Scml4) from Mus musculus (Mouse).